Reading from the N-terminus, the 940-residue chain is MGSGPIDPKELLKGLDSFLNRDGEVKSVDGISKIFSLMKEARKMVSRCTYLNILLQTRSPEILVKFIDVGGYKLLNNWLTYSKTTNNIPLLQQILLTLQHLPLTVDHLKQNNTAKLVKQLSKSSEDEELRKLASVLVSDWMAVIRSQSSTQPAEKDKKKRKDEGKSRTTLPERPLTEVKAETRAEEAPEKKREKPKSLRTTAPSHAKFRSTGLELETPSLVPVKKNASTVVVSDKYNLKPIPLKRQSNVAAPGDATPPAEKKYKPLNTTPNATKEIKVKIIPPQPMEGLGFLDALNSAPVPGIKIKKKKKVLSPTAAKPSPFEGKTSTEPSTAKPSSPEPAPPSEAMEADRPGTPVPPVEVPELMDTASLEPGALDAKPVESPGDPNQLTRKGRKRKSVTWPEEGKLREYFYFELDETERVNVNKIKDFGEAAKREILSDRHAFETARRLSHDNMEEKVPWVCPRPLVLPSPLVTPGSNSQERYIQAEREKGILQELFLNKESPHEPDPEPYEPIPPKLIPLDEECSMDETPYVETLEPGGSGGSPDGAGGSKLPPVLANLMGSMGAGKGPQGPGAGGINVQEILTSIMGSPNSHPSEELLKQPDYSDKIKQMLVPHGLLGPGPIANGFPPGGPGGPKGMQHFPPGPGGPMPGPHGGPGGPVGPRLLGPPPPPRGGDPFWDGPGDPMRGGPMRGGPGPGPGPYHRGRGGRGGNEPPPPPPPFRGARGGRSGGGPPNGRGGPGGGMVGGGGHRPHEGPGGGMGNNSGHRPHEGPGGGMGSGHRPHEGPAGSMGGGGGHRPHEGPGGGISGGSGHRPHEGPGGGMGAGGGHRPHEGPGGSMGGSGGHRPHEGPGHGGPHGHRPHDVPGHRGHDHRGPPPHEHRGHDGPGHGGGGHRGHDGGHSHGGDMSNRPVCRHFMMKGNCRYENNCAFYHPGVNGPPLP.

The interaction with TOX4 stretch occupies residues 1 to 348 (MGSGPIDPKE…EPAPPSEAME (348 aa)). In terms of domain architecture, TFIIS N-terminal spans 73-147 (KLLNNWLTYS…SDWMAVIRSQ (75 aa)). Disordered regions lie at residues 147–210 (QSST…KFRS), 248–270 (NVAAPGDATPPAEKKYKPLNTTP), 304–400 (KIKK…KSVT), and 534–557 (VETLEPGGSGGSPDGAGGSKLPPV). Composition is skewed to basic and acidic residues over residues 153-166 (AEKDKKKRKDEGKS) and 174-196 (PLTEVKAETRAEEAPEKKREKPK). Lys179 participates in a covalent cross-link: Glycyl lysine isopeptide (Lys-Gly) (interchain with G-Cter in SUMO2). At Thr256 the chain carries Phosphothreonine. Lys262 participates in a covalent cross-link: Glycyl lysine isopeptide (Lys-Gly) (interchain with G-Cter in SUMO2). Residue Ser313 is modified to Phosphoserine. The segment covering 325-336 (KTSTEPSTAKPS) has biased composition (low complexity). Residues 357 to 433 (PPVEVPELMD…NKIKDFGEAA (77 aa)) are necessary for interaction with PPP1CA. Ser382 carries the phosphoserine modification. The necessary for interaction with PPP1CC stretch occupies residues 393-408 (GRKRKSVTWPEEGKLR). Positions 394 to 423 (RKRKSVTWPEEGKLREYFYFELDETERVNV) match the PP1-binding motif motif. The residue at position 398 (Ser398) is a Phosphoserine; by PKA. The tract at residues 418–619 (TERVNVNKIK…IKQMLVPHGL (202 aa)) is interaction with WDR82. Residues 540 to 551 (GGSGGSPDGAGG) are compositionally biased toward gly residues. Phosphoserine is present on residues Ser545 and Ser591. The tract at residues 617 to 905 (HGLLGPGPIA…HDGGHSHGGD (289 aa)) is disordered. Residues 644-655 (PPGPGGPMPGPH) are compositionally biased toward pro residues. An Omega-N-methylarginine modification is found at Arg665. Positions 676 to 690 (GDPFWDGPGDPMRGG) are enriched in low complexity. Residues Arg693 and Arg738 each carry the omega-N-methylarginine modification. Composition is skewed to gly residues over residues 725 to 763 (ARGGRSGGGPPNGRGGPGGGMVGGGGHRPHEGPGGGMGN) and 789 to 844 (GSMG…GSGG). Composition is skewed to basic and acidic residues over residues 861–886 (PHDVPGHRGHDHRGPPPHEHRGHDGP) and 894–903 (RGHDGGHSHG). The C3H1-type zinc-finger motif lies at 906 to 934 (MSNRPVCRHFMMKGNCRYENNCAFYHPGV).

Component of the PNUTS-PP1 complex (also named PTW/PP1 complex), composed of PPP1R10/PNUTS, TOX4, WDR82, and PPP1CA (or PPP1CB or PPP1CC). In terms of processing, phosphorylated on Ser-398 by PKA within the region necessary for interaction with PPP1CA.

It is found in the nucleus. Its subcellular location is the chromosome. In terms of biological role, substrate-recognition component of the PNUTS-PP1 protein phosphatase complex, a protein phosphatase 1 (PP1) complex that promotes RNA polymerase II transcription pause-release, allowing transcription elongation. Promoter-proximal pausing by RNA polymerase II is a transcription halt following transcription initiation but prior to elongation, which acts as a checkpoint to control that transcripts are favorably configured for transcriptional elongation. The PNUTS-PP1 complex mediates the release of RNA polymerase II from promoter-proximal region of genes by catalyzing dephosphorylation of proteins involved in transcription, such as AFF4, CDK9, MEPCE, INTS12, NCBP1, POLR2M/GDOWN1 and SUPT6H. The PNUTS-PP1 complex also regulates RNA polymerase II transcription termination by mediating dephosphorylation of SUPT5H in termination zones downstream of poly(A) sites, thereby promoting deceleration of RNA polymerase II transcription. PNUTS-PP1 complex is also involved in the response to replication stress by mediating dephosphorylation of POLR2A at 'Ser-5' of the CTD, promoting RNA polymerase II degradation. The PNUTS-PP1 complex also plays a role in the control of chromatin structure and cell cycle progression during the transition from mitosis into interphase. PNUTS-PP1 complex mediates dephosphorylation of MYC, promoting MYC stability by preventing MYC ubiquitination by the SCF(FBXW7) complex. In addition to acts as a substrate-recognition component, PPP1R10/PNUTS also acts as a nuclear targeting subunit for the PNUTS-PP1 complex. In some context, PPP1R10/PNUTS also acts as an inhibitor of protein phosphatase 1 (PP1) activity by preventing access to substrates, such as RB. This Pan troglodytes (Chimpanzee) protein is Serine/threonine-protein phosphatase 1 regulatory subunit 10 (PPP1R10).